The chain runs to 469 residues: Phenolic glucoside malonyltransferase 1 (469 aa).

N-acetylmethionine is present on methionine 1. Histidine 169 acts as the Proton acceptor in catalysis. Residues 169–173 (HAVLD) carry the HXXXD motif motif. Position 291-292 (291-292 (ST)) interacts with malonyl-CoA. Aspartate 413 serves as the catalytic Proton acceptor. A DFGWG motif motif is present at residues 413-417 (DFGWG).

The protein belongs to the plant acyltransferase family. Phenolic glucoside malonyltransferase subfamily.

The enzyme catalyses a flavonol 3-O-beta-D-glucoside + malonyl-CoA = a flavonol 3-O-(6-O-malonyl-beta-D-glucoside) + CoA. It catalyses the reaction a flavonol 7-O-beta-D-glucoside + malonyl-CoA = a flavonol 7-O-(6-O-malonyl-beta-D-glucoside) + CoA. In terms of biological role, malonyltransferase acting on xenobiotic glucosides. Has activity toward 2-Naphthol glucoside (2NAG), 1-Naphthol glucoside (1NAG), kaempferol 7-O-glucoside, kaempferol 3-O-glucoside, hydroxycoumarin glucosides, phenol-glucosides and isoflavone glucoside (daidzin), but not toward 4-coumaroyl glucoside, kaempferol 3,7-O-diglucoside, salicylic acid glucoside and phlorizin. In vivo, seems to be involved in the malonylation of 2-Naphthol glucoside while PMAT2 would be involved in the malonylation of 4-methylumbelliferone glucoside or 4-nitrophenyl glucoside. The sequence is that of Phenolic glucoside malonyltransferase 1 (PMAT1) from Arabidopsis thaliana (Mouse-ear cress).